Reading from the N-terminus, the 109-residue chain is Large ribosomal subunit protein uL1 (109 aa).

Belongs to the universal ribosomal protein uL1 family. In terms of assembly, part of the 50S ribosomal subunit.

In terms of biological role, binds directly to 23S rRNA. The L1 stalk is quite mobile in the ribosome, and is involved in E site tRNA release. Functionally, protein L1 is also a translational repressor protein, it controls the translation of the L11 operon by binding to its mRNA. The protein is Large ribosomal subunit protein uL1 (rplA) of Aquifex pyrophilus.